A 417-amino-acid chain; its full sequence is Acetate kinase (417 aa).

Residue asparagine 7 participates in Mg(2+) binding. Residue lysine 14 coordinates ATP. Arginine 104 lines the substrate pocket. Aspartate 162 serves as the catalytic Proton donor/acceptor. ATP is bound by residues 222-226 (HLGNG), 297-299 (DMR), and 346-350 (GIGEN). Mg(2+) is bound at residue glutamate 401.

Belongs to the acetokinase family. Homodimer. Mg(2+) is required as a cofactor. Mn(2+) serves as cofactor.

Its subcellular location is the cytoplasm. It carries out the reaction acetate + ATP = acetyl phosphate + ADP. It functions in the pathway metabolic intermediate biosynthesis; acetyl-CoA biosynthesis; acetyl-CoA from acetate: step 1/2. Catalyzes the formation of acetyl phosphate from acetate and ATP. Can also catalyze the reverse reaction. This chain is Acetate kinase, found in Chloroherpeton thalassium (strain ATCC 35110 / GB-78).